Consider the following 430-residue polypeptide: uncharacterized protein (430 aa).

12 helical membrane passes run 18-38 (LFLL…NTFV), 49-69 (FIDL…TFYL), 80-100 (VFIL…VLLA), 109-129 (VLIG…FNVL), 145-165 (FMGI…GFVI), 175-195 (TVIF…SFFL), 235-255 (IFVF…LALG), 256-276 (TFGL…SRLI), 285-305 (ILLG…HMSF), 307-327 (TLLT…VPYV), 353-373 (MFLN…VALL), and 377-397 (VGIP…YYFV). The segment at 407-430 (GENETMEEDGQKRVTEPTLLKGER) is disordered. Residues 415 to 430 (DGQKRVTEPTLLKGER) are compositionally biased toward basic and acidic residues.

The protein resides in the cell membrane. This is an uncharacterized protein from Bacillus subtilis (strain 168).